A 231-amino-acid chain; its full sequence is Heptaprenylglyceryl phosphate synthase (231 aa).

Residue Lys-12 participates in sn-glycerol 1-phosphate binding. Mg(2+) is bound by residues Asp-14 and Thr-40. Residues 159 to 164 (YMEYSG), Gly-189, and 209 to 210 (GN) each bind sn-glycerol 1-phosphate.

This sequence belongs to the GGGP/HepGP synthase family. Group I subfamily. In terms of assembly, homodimer. The cofactor is Mg(2+).

The catalysed reaction is sn-glycerol 1-phosphate + all-trans-heptaprenyl diphosphate = 3-heptaprenyl-sn-glycero-1-phosphate + diphosphate. Its pathway is membrane lipid metabolism; glycerophospholipid metabolism. Its function is as follows. Prenyltransferase that catalyzes in vivo the transfer of the heptaprenyl moiety of heptaprenyl pyrophosphate (HepPP; 35 carbon atoms) to the C3 hydroxyl of sn-glycerol-1-phosphate (G1P), producing heptaprenylglyceryl phosphate (HepGP). This reaction is an ether-bond-formation step in the biosynthesis of archaea-type G1P-based membrane lipids found in Bacillales. This chain is Heptaprenylglyceryl phosphate synthase, found in Anoxybacillus flavithermus (strain DSM 21510 / WK1).